The sequence spans 98 residues: Small ribosomal subunit protein uS19 (98 aa).

Residues 77-98 (TRTFRGHAGGKAEKGGSAPKKK) form a disordered region.

This sequence belongs to the universal ribosomal protein uS19 family.

Protein S19 forms a complex with S13 that binds strongly to the 16S ribosomal RNA. This chain is Small ribosomal subunit protein uS19, found in Chlorobium phaeobacteroides (strain DSM 266 / SMG 266 / 2430).